A 249-amino-acid polypeptide reads, in one-letter code: Exosome complex component Rrp41 (249 aa).

It belongs to the RNase PH family. Rrp41 subfamily. Component of the archaeal exosome complex. Forms a hexameric ring-like arrangement composed of 3 Rrp41-Rrp42 heterodimers. The hexameric ring associates with a trimer of Rrp4 and/or Csl4 subunits.

It localises to the cytoplasm. In terms of biological role, catalytic component of the exosome, which is a complex involved in RNA degradation. Has 3'-&gt;5' exoribonuclease activity. Can also synthesize heteromeric RNA-tails. This chain is Exosome complex component Rrp41, found in Thermococcus onnurineus (strain NA1).